The chain runs to 785 residues: E3 UFM1-protein ligase 1 homolog (785 aa).

Basic and acidic residues predominate over residues 396 to 416; sequence MKHQDVIPDKESAENKADKRD. The tract at residues 396 to 473 is disordered; it reads MKHQDVIPDK…KSAGGKKGAK (78 aa). Over residues 439–449 the composition is skewed to basic residues; it reads KSTKKHARGHR.

Belongs to the UFL1 family.

Its function is as follows. E3 UFM1-protein ligase that mediates ufmylation of target proteins. This is E3 UFM1-protein ligase 1 homolog from Culex quinquefasciatus (Southern house mosquito).